The primary structure comprises 377 residues: Transcription factor Sox-17-alpha-B (377 aa).

2 disordered regions span residues 1–20 (MSSP…KCSV) and 31–57 (QWSE…AEGR). Basic and acidic residues predominate over residues 42–57 (GKLKSDANSRSKAEGR). The HMG box DNA-binding region spans 58-126 (IRRPMNAFMV…QHMQDHPNYK (69 aa)). Residues 262 to 376 (GSPVEGMMAC…TAVYYCNYPS (115 aa)) enclose the Sox C-terminal domain. The segment at 282–321 (MYLPGSTRHHQHPQAGQPSPPPEAQQLGRADQTQQADMMA) is disordered. The 9aaTAD motif lies at 325-333 (TEFEQYLSY). Residues 326–331 (EFEQYL) are required for transcriptional activity and interaction with ctnnb1.

In terms of assembly, interacts (via C-terminus) with ctnnb1/beta-catenin (via Armadillo repeats); this interaction is required for inhibition of wnt-signaling. Enriched in the embryonic endoderm. Expressed in the embryonic gut, with strong expression in the posterior gut during tailbud stages. Expressed at a low level in the adult kidney and spleen.

It is found in the nucleus. Its function is as follows. Transcription activator. Binds to the DNA sequence 5'-AACAAT-3'. All of the sox17 proteins are required for embryonic endoderm development and gastrulation movements, and show some redundancy in function. In addition, the sox17 proteins have distinct but overlapping roles in later gut development. Acts downstream of vegt-signaling in endoderm differentiation to induce a range of endodermal genes both directly (including endodermin and dhh/chh) and indirectly. Also represses wnt-responsive genes to inhibit wnt/beta-catenin signaling. The polypeptide is Transcription factor Sox-17-alpha-B (sox17a-b) (Xenopus laevis (African clawed frog)).